Here is a 240-residue protein sequence, read N- to C-terminus: Uridylate kinase (240 aa).

13–16 (KASG) contributes to the ATP binding site. The interval 21–26 (GGQGFG) is involved in allosteric activation by GTP. Glycine 55 is a UMP binding site. The ATP site is built by glycine 56 and arginine 60. UMP-binding positions include aspartate 75 and 136 to 143 (TGNPFFTT). ATP contacts are provided by threonine 163, glutamine 164, tyrosine 169, and aspartate 172.

Belongs to the UMP kinase family. In terms of assembly, homohexamer.

It is found in the cytoplasm. It catalyses the reaction UMP + ATP = UDP + ADP. The protein operates within pyrimidine metabolism; CTP biosynthesis via de novo pathway; UDP from UMP (UMPK route): step 1/1. Its activity is regulated as follows. Allosterically activated by GTP. Inhibited by UTP. In terms of biological role, catalyzes the reversible phosphorylation of UMP to UDP. The sequence is that of Uridylate kinase from Rhizobium johnstonii (strain DSM 114642 / LMG 32736 / 3841) (Rhizobium leguminosarum bv. viciae).